The primary structure comprises 631 residues: Methanol dehydrogenase [cytochrome c] subunit 1 (631 aa).

The signal sequence occupies residues 1–32; that stretch reads MNRNTPKARGASSLAMAVAMGLAVLTTAPATA. A disulfide bridge connects residues cysteine 135 and cysteine 136. Ca(2+) is bound by residues glutamate 209 and asparagine 293. Aspartate 335 serves as the catalytic Proton acceptor. Cysteines 418 and 447 form a disulfide.

This sequence belongs to the bacterial PQQ dehydrogenase family. As to quaternary structure, heterotetramer composed of 2 alpha and 2 beta subunits. Requires pyrroloquinoline quinone as cofactor. Ca(2+) serves as cofactor.

It is found in the periplasm. The enzyme catalyses 2 Fe(III)-[cytochrome cL] + a primary alcohol = 2 Fe(II)-[cytochrome cL] + an aldehyde + 2 H(+). In terms of biological role, catalyzes the oxidation of primary alcohols including methanol. In Paracoccus denitrificans, this protein is Methanol dehydrogenase [cytochrome c] subunit 1 (moxF).